The following is a 309-amino-acid chain: Aspartate carbamoyltransferase catalytic subunit (309 aa).

R55 and T56 together coordinate carbamoyl phosphate. K85 is an L-aspartate binding site. The carbamoyl phosphate site is built by R106, H135, and Q138. R168 and R230 together coordinate L-aspartate. Carbamoyl phosphate is bound by residues L268 and P269.

The protein belongs to the aspartate/ornithine carbamoyltransferase superfamily. ATCase family. Heterododecamer (2C3:3R2) of six catalytic PyrB chains organized as two trimers (C3), and six regulatory PyrI chains organized as three dimers (R2).

The catalysed reaction is carbamoyl phosphate + L-aspartate = N-carbamoyl-L-aspartate + phosphate + H(+). It participates in pyrimidine metabolism; UMP biosynthesis via de novo pathway; (S)-dihydroorotate from bicarbonate: step 2/3. Functionally, catalyzes the condensation of carbamoyl phosphate and aspartate to form carbamoyl aspartate and inorganic phosphate, the committed step in the de novo pyrimidine nucleotide biosynthesis pathway. In Vibrio cholerae serotype O1 (strain ATCC 39315 / El Tor Inaba N16961), this protein is Aspartate carbamoyltransferase catalytic subunit.